The primary structure comprises 146 residues: Large ribosomal subunit protein uL15 (146 aa).

The interval 1 to 61 (MELNSLKPAA…GGQMPMHRRL (61 aa)) is disordered. Positions 30–39 (TATKGHKGQK) are enriched in basic residues.

Belongs to the universal ribosomal protein uL15 family. Part of the 50S ribosomal subunit.

Binds to the 23S rRNA. The chain is Large ribosomal subunit protein uL15 from Geotalea uraniireducens (strain Rf4) (Geobacter uraniireducens).